A 106-amino-acid chain; its full sequence is L-rhamnose mutarotase (106 aa).

Position 20 (Y20) interacts with substrate. The active-site Proton donor is the H24. Residues Y43 and 78-79 (WW) contribute to the substrate site.

Belongs to the rhamnose mutarotase family. Homodimer.

It is found in the cytoplasm. It catalyses the reaction alpha-L-rhamnose = beta-L-rhamnose. The protein operates within carbohydrate metabolism; L-rhamnose metabolism. Its function is as follows. Involved in the anomeric conversion of L-rhamnose. In Leptothrix cholodnii (strain ATCC 51168 / LMG 8142 / SP-6) (Leptothrix discophora (strain SP-6)), this protein is L-rhamnose mutarotase.